Reading from the N-terminus, the 287-residue chain is tRNA pseudouridine synthase B (287 aa).

Catalysis depends on D38, which acts as the Nucleophile.

Belongs to the pseudouridine synthase TruB family. Type 1 subfamily.

It catalyses the reaction uridine(55) in tRNA = pseudouridine(55) in tRNA. Functionally, responsible for synthesis of pseudouridine from uracil-55 in the psi GC loop of transfer RNAs. In Mycoplasma mobile (strain ATCC 43663 / 163K / NCTC 11711) (Mesomycoplasma mobile), this protein is tRNA pseudouridine synthase B.